A 459-amino-acid chain; its full sequence is Probable D-serine dehydratase (459 aa).

The residue at position 119 (K119) is an N6-(pyridoxal phosphate)lysine.

This sequence belongs to the serine/threonine dehydratase family. DsdA subfamily. It depends on pyridoxal 5'-phosphate as a cofactor.

The enzyme catalyses D-serine = pyruvate + NH4(+). The sequence is that of Probable D-serine dehydratase from Geobacillus stearothermophilus (Bacillus stearothermophilus).